Here is a 288-residue protein sequence, read N- to C-terminus: Acetyl-coenzyme A carboxylase carboxyl transferase subunit beta (288 aa).

In terms of domain architecture, CoA carboxyltransferase N-terminal spans 30–288 (IMTKCPKCKK…KMHQEVKTNA (259 aa)). Zn(2+) is bound by residues Cys-34, Cys-37, Cys-53, and Cys-56. The segment at 34–56 (CPKCKKIMYTKELAENLNVCFNC) adopts a C4-type zinc-finger fold.

This sequence belongs to the AccD/PCCB family. Acetyl-CoA carboxylase is a heterohexamer composed of biotin carboxyl carrier protein (AccB), biotin carboxylase (AccC) and two subunits each of ACCase subunit alpha (AccA) and ACCase subunit beta (AccD). Requires Zn(2+) as cofactor.

The protein resides in the cytoplasm. It catalyses the reaction N(6)-carboxybiotinyl-L-lysyl-[protein] + acetyl-CoA = N(6)-biotinyl-L-lysyl-[protein] + malonyl-CoA. The protein operates within lipid metabolism; malonyl-CoA biosynthesis; malonyl-CoA from acetyl-CoA: step 1/1. Functionally, component of the acetyl coenzyme A carboxylase (ACC) complex. Biotin carboxylase (BC) catalyzes the carboxylation of biotin on its carrier protein (BCCP) and then the CO(2) group is transferred by the transcarboxylase to acetyl-CoA to form malonyl-CoA. This is Acetyl-coenzyme A carboxylase carboxyl transferase subunit beta from Staphylococcus saprophyticus subsp. saprophyticus (strain ATCC 15305 / DSM 20229 / NCIMB 8711 / NCTC 7292 / S-41).